We begin with the raw amino-acid sequence, 526 residues long: Phenylacetaldehyde oxime monooxygenase CYP71AN24 (526 aa).

A helical transmembrane segment spans residues 22–42; sequence SFNIFLVPILCLSIFILFSLT. Residue C465 participates in heme binding.

It belongs to the cytochrome P450 family. It depends on heme as a cofactor. Expressed in seedlings and leaves.

It localises to the membrane. The catalysed reaction is (E)-phenylacetaldehyde oxime + reduced [NADPH--hemoprotein reductase] + O2 = (R)-mandelonitrile + oxidized [NADPH--hemoprotein reductase] + 2 H2O + H(+). It catalyses the reaction phenylacetonitrile + reduced [NADPH--hemoprotein reductase] + O2 = (R)-mandelonitrile + oxidized [NADPH--hemoprotein reductase] + H2O + H(+). In terms of biological role, involved in L-phenylalanine-derived cyanogenic glycoside biosynthesis, including prunasin and amygdalin defensive agents. Catalyzes the conversion of phenylacetaldoxime (PAOx) and phenylacetonitrile (PAN) into mandelonitrile (MAN). To a lower extent, can convert various aromatic aldoximes and nitriles; mediates the transformation of 4-hydroxyphenylacetaldoxime, 4-hydroxyphenylacetonitrile, indole-3-acetal-doxime and indole-3-acetonitrile into the corresponding hydroxynitriles, but cannot use the aliphatic compounds 2-methylpropanaloxime and 2-methylpropanenitrile as substrates. The polypeptide is Phenylacetaldehyde oxime monooxygenase CYP71AN24 (Prunus mume (Japanese apricot)).